The following is a 255-amino-acid chain: uncharacterized protein (255 aa).

The first 23 residues, 1-23, serve as a signal peptide directing secretion; the sequence is MKRLNKLVLYISFLILVISFTAG. A lipid anchor (N-palmitoyl cysteine) is attached at Cys-24. Cys-24 carries the S-diacylglycerol cysteine lipid modification.

It belongs to the staphylococcal tandem lipoprotein family.

The protein localises to the cell membrane. This is an uncharacterized protein from Staphylococcus aureus (strain N315).